The primary structure comprises 160 residues: Nucleotide-binding protein VF_1240 (160 aa).

It belongs to the YajQ family.

In terms of biological role, nucleotide-binding protein. This chain is Nucleotide-binding protein VF_1240, found in Aliivibrio fischeri (strain ATCC 700601 / ES114) (Vibrio fischeri).